The primary structure comprises 521 residues: FAD-dependent monooxygenase DEP2 (521 aa).

The first 22 residues, 1–22 (MHDSPPFKVIIVGAGVTGLTLA), serve as a signal peptide directing secretion. FAD-binding residues include Asp-36 and Arg-109. Residues Asn-139 and Asn-220 are each glycosylated (N-linked (GlcNAc...) asparagine). FAD-binding residues include Asp-310 and Gly-323. Residues 477–497 (ILVLWAGLWLAICFFHLVFSG) form a helical membrane-spanning segment. Asn-515 carries N-linked (GlcNAc...) asparagine glycosylation.

The protein belongs to the paxM FAD-dependent monooxygenase family. FAD is required as a cofactor.

It localises to the membrane. It functions in the pathway polyketide biosynthesis. In terms of biological role, part of the gene cluster that mediates the biosynthesis of depudecin, a highly oxidized eleven-carbon linear polyketide that acts as a histone deacetylase (HDAC) inhibitor and makes a small contribution to pathogenesis. The reducing polyketide synthase DEP5 is the central enzyme in depudecin biosynthesis by yielding the backbone polyketide chain. The monooxygenases DEP2 and DEP4, as well as the uncharacterized protein DEP1, then act as tailoring enzymes to modify the intermediate polyketide chain into depudecin. The protein is FAD-dependent monooxygenase DEP2 of Fusarium langsethiae.